The primary structure comprises 325 residues: Tetraacyldisaccharide 4'-kinase (325 aa).

55–62 (TAGGNGKT) is a binding site for ATP.

The protein belongs to the LpxK family.

It catalyses the reaction a lipid A disaccharide + ATP = a lipid IVA + ADP + H(+). Its pathway is glycolipid biosynthesis; lipid IV(A) biosynthesis; lipid IV(A) from (3R)-3-hydroxytetradecanoyl-[acyl-carrier-protein] and UDP-N-acetyl-alpha-D-glucosamine: step 6/6. Its function is as follows. Transfers the gamma-phosphate of ATP to the 4'-position of a tetraacyldisaccharide 1-phosphate intermediate (termed DS-1-P) to form tetraacyldisaccharide 1,4'-bis-phosphate (lipid IVA). This chain is Tetraacyldisaccharide 4'-kinase, found in Salmonella agona (strain SL483).